The following is an 87-amino-acid chain: Small ribosomal subunit protein uS17 (87 aa).

This sequence belongs to the universal ribosomal protein uS17 family. Part of the 30S ribosomal subunit.

Its function is as follows. One of the primary rRNA binding proteins, it binds specifically to the 5'-end of 16S ribosomal RNA. The polypeptide is Small ribosomal subunit protein uS17 (Syntrophobacter fumaroxidans (strain DSM 10017 / MPOB)).